Consider the following 361-residue polypeptide: uncharacterized protein (361 aa).

A signal peptide spans 1–19 (MNLVICVLLLSIWKNNCMT). Topologically, residues 20–47 (TNQTNGSSTTGDKPVESMQTKLNYLRRN) are extracellular. An N-linked (GlcNAc...) asparagine glycan is attached at asparagine 24. Residues 48–68 (LLILVGIIIMVFVFICFCYLH) traverse the membrane as a helical segment. Residues 69–361 (YNCLSDDASK…QVTSEVTLND (293 aa)) are Cytoplasmic-facing. Residues 99-113 (AKTASQCSPETQPML) show a composition bias toward polar residues. 3 disordered regions span residues 99–184 (AKTA…KAHK), 209–247 (PPQL…NPKR), and 295–316 (QNLH…LDSR). Positions 114–133 (STADKSSDSSSPERASAQSS) are enriched in low complexity. A compositionally biased stretch (polar residues) spans 141 to 150 (SSLQKPSIPN). Over residues 299 to 308 (VSSKVKSSSR) the composition is skewed to low complexity.

The protein resides in the membrane. This is an uncharacterized protein from Homo sapiens (Human).